The following is a 227-amino-acid chain: Uracil-DNA glycosylase (227 aa).

Asp-68 acts as the Proton acceptor in catalysis.

It belongs to the uracil-DNA glycosylase (UDG) superfamily. UNG family.

It localises to the cytoplasm. The catalysed reaction is Hydrolyzes single-stranded DNA or mismatched double-stranded DNA and polynucleotides, releasing free uracil.. Functionally, excises uracil residues from the DNA which can arise as a result of misincorporation of dUMP residues by DNA polymerase or due to deamination of cytosine. The polypeptide is Uracil-DNA glycosylase (Mycobacterium avium (strain 104)).